Reading from the N-terminus, the 195-residue chain is U8 snoRNA-decapping enzyme (195 aa).

In terms of domain architecture, Nudix hydrolase spans 18–168 (GWRHACHALL…LENTFIGNAR (151 aa)). Positions 24, 50, and 57 each coordinate substrate. Residues Gly-59, Glu-76, Glu-80, and His-99 each contribute to the Mn(2+) site. A Nudix box motif is present at residues 61-82 (FVDLRDGSLEDGLNRELGEELG). Positions 166 and 170 each coordinate substrate. Residue Glu-173 coordinates Mn(2+).

The protein belongs to the Nudix hydrolase family. NUDT16 subfamily. In terms of assembly, homodimer. The cofactor is Mg(2+). Mn(2+) is required as a cofactor. It depends on Co(2+) as a cofactor.

The protein resides in the nucleus. The protein localises to the nucleolus. Its subcellular location is the nucleoplasm. It is found in the cytoplasm. The enzyme catalyses a 5'-end (N(7)-methyl 5'-triphosphoguanosine)-ribonucleoside in mRNA + H2O = N(7)-methyl-GDP + a 5'-end phospho-ribonucleoside in mRNA + 2 H(+). It catalyses the reaction IDP + H2O = IMP + phosphate + H(+). The catalysed reaction is dIDP + H2O = dIMP + phosphate + H(+). It carries out the reaction a 5'-end NAD(+)-phospho-ribonucleoside in mRNA + H2O = a 5'-end phospho-ribonucleoside in mRNA + NAD(+) + H(+). The enzyme catalyses a 5'-end FAD-phospho-ribonucleoside in mRNA + H2O = a 5'-end phospho-adenosine-phospho-ribonucleoside in mRNA + FMN + 2 H(+). It catalyses the reaction a 5'-end CoA-ribonucleoside in mRNA + H2O = a 5'-end phospho-adenosine-phospho-ribonucleoside in mRNA + (R)-4'-phosphopantetheine + 2 H(+). In terms of biological role, RNA-binding and decapping enzyme that catalyzes the cleavage of the cap structure of snoRNAs and mRNAs in a metal-dependent manner. Part of the U8 snoRNP complex that is required for the accumulation of mature 5.8S and 28S rRNA. Has diphosphatase activity and removes m7G and/or m227G caps from U8 snoRNA and leaves a 5'monophosphate on the RNA. Also catalyzes the cleavage of the cap structure on mRNAs. Does not hydrolyze cap analog structures like 7-methylguanosine nucleoside triphosphate (m7GpppG). Also hydrolysis m7G- and m227G U3-capped RNAs but with less efficiencies. Has broad substrate specificity with manganese or cobalt as cofactor and can act on various RNA species. Binds to the U8 snoRNA; metal is not required for RNA-binding. May play a role in the regulation of snoRNAs and mRNAs degradation. Also acts as a phosphatase; hydrolyzes the non-canonical purine nucleotides inosine diphosphate (IDP) and deoxyinosine diphosphate (dITP) as well as guanosine diphosphate (GDP), deoxyguanosine diphosphate (dGDP), xanthine diphosphate (XDP), inosine triphosphate (ITP) and deoxyinosine triphosphate (ITP) to their respective monophosphate derivatives and does not distinguish between the deoxy- and ribose forms. The order of activity with different substrates is IDP &gt; dIDP &gt;&gt; GDP = dGDP &gt; XDP = ITP = dITP. Binds strongly to GTP, ITP and XTP. Participates in the hydrolysis of dIDP/IDP and probably excludes non-canonical purines from RNA and DNA precursor pools, thus preventing their incorporation into RNA and DNA and avoiding chromosomal lesions. Exhibits decapping activity towards NAD-capped RNAs and FAD-capped RNAs. Exhibits decapping activity towards dpCoA-capped RNAs in vitro. The polypeptide is U8 snoRNA-decapping enzyme (NUDT16) (Bos taurus (Bovine)).